The primary structure comprises 362 residues: Cationic peroxidase SPC4 (362 aa).

The first 31 residues, 1-31 (MSRAPTLAAAAAVAAVVLICSSSTATAADGN), serve as a signal peptide directing secretion. Intrachain disulfides connect C50-C131, C83-C88, C138-C333, and C218-C245. H81 serves as the catalytic Proton acceptor. The Ca(2+) site is built by D82, V85, G87, D89, and S91. A glycan (N-linked (GlcNAc...) asparagine) is linked at N109. T111 is a binding site for (indol-3-yl)acetate. P181 lines the substrate pocket. Heme b is bound at residue H211. Ca(2+) is bound at residue T212. N-linked (GlcNAc...) asparagine glycosylation is present at N234. Ca(2+)-binding residues include D257, T260, A263, and D265. N-linked (GlcNAc...) asparagine glycosylation is present at N332.

Belongs to the peroxidase family. Classical plant (class III) peroxidase subfamily. As to quaternary structure, monomer. Heme b is required as a cofactor. Ca(2+) serves as cofactor. Post-translationally, the proportions of glycoforms I and II are 35% and 65% respectively. As to expression, present in germinated and ungerminated grain, seedlings, and leaves and stem of the mature plant.

The protein localises to the secreted. The catalysed reaction is 2 a phenolic donor + H2O2 = 2 a phenolic radical donor + 2 H2O. Its function is as follows. Removal of H(2)O(2), oxidation of toxic reductants, biosynthesis and degradation of lignin, suberization, auxin catabolism, response to environmental stresses such as wounding, pathogen attack and oxidative stress. These functions might be dependent on each isozyme/isoform in each plant tissue. Has a high preference for hydroxycinnamates as substrates. Substrate preference is ferulic acid &gt; p-coumaric acid &gt; N-acetyl tyrosine methyl ester &gt; N-acetyl-tyrosine &gt; tyrosine &gt; catechol &gt; Gly-Tyr-Gly. May be involved in the formation of diferulate linkages in the plant cell wall. This Sorghum bicolor (Sorghum) protein is Cationic peroxidase SPC4.